Consider the following 389-residue polypeptide: S-adenosylmethionine synthase (389 aa).

H19 contacts ATP. Residue D21 participates in Mg(2+) binding. Position 47 (E47) interacts with K(+). 2 residues coordinate L-methionine: E60 and Q103. Residues 103–113 (QSVDIAQGVDR) are flexible loop. Residues 168-170 (DGK), 234-235 (RF), D243, 249-250 (RK), A266, and K270 each bind ATP. An L-methionine-binding site is contributed by D243. K274 is an L-methionine binding site.

The protein belongs to the AdoMet synthase family. Homotetramer; dimer of dimers. It depends on Mg(2+) as a cofactor. Requires K(+) as cofactor.

Its subcellular location is the cytoplasm. The catalysed reaction is L-methionine + ATP + H2O = S-adenosyl-L-methionine + phosphate + diphosphate. It functions in the pathway amino-acid biosynthesis; S-adenosyl-L-methionine biosynthesis; S-adenosyl-L-methionine from L-methionine: step 1/1. Its function is as follows. Catalyzes the formation of S-adenosylmethionine (AdoMet) from methionine and ATP. The overall synthetic reaction is composed of two sequential steps, AdoMet formation and the subsequent tripolyphosphate hydrolysis which occurs prior to release of AdoMet from the enzyme. The sequence is that of S-adenosylmethionine synthase from Maridesulfovibrio salexigens (strain ATCC 14822 / DSM 2638 / NCIMB 8403 / VKM B-1763) (Desulfovibrio salexigens).